Consider the following 212-residue polypeptide: MTSQRTRERLIQRLCEEGVSNTKVLDVIRRTPRHLFVDEALAHRAYEDTALPIGHNQTISQPFMVAHMSELLLEAGPLDKVLEIGTGSGYQTAILAQLVERVFSVERIKVLQDRAKERLVELNLRNVVFRWGDGCEGWPALAPYNGIIVTAVAPEVPQALLDQLAPGGRMVIPVGPAGEAQQLMLIVREEHGFSRRVLGAVRFVPLLNGPLA.

Serine 60 is an active-site residue.

It belongs to the methyltransferase superfamily. L-isoaspartyl/D-aspartyl protein methyltransferase family.

It localises to the cytoplasm. It catalyses the reaction [protein]-L-isoaspartate + S-adenosyl-L-methionine = [protein]-L-isoaspartate alpha-methyl ester + S-adenosyl-L-homocysteine. Functionally, catalyzes the methyl esterification of L-isoaspartyl residues in peptides and proteins that result from spontaneous decomposition of normal L-aspartyl and L-asparaginyl residues. It plays a role in the repair and/or degradation of damaged proteins. The polypeptide is Protein-L-isoaspartate O-methyltransferase (Pseudomonas putida (strain ATCC 700007 / DSM 6899 / JCM 31910 / BCRC 17059 / LMG 24140 / F1)).